Consider the following 309-residue polypeptide: 2-phospho-L-lactate transferase (309 aa).

7,8-didemethyl-8-hydroxy-5-deazariboflavin is bound by residues aspartate 48 and lysine 87.

It belongs to the CofD family. In terms of assembly, homodimer. Mg(2+) serves as cofactor.

It carries out the reaction (2S)-lactyl-2-diphospho-5'-guanosine + 7,8-didemethyl-8-hydroxy-5-deazariboflavin = oxidized coenzyme F420-0 + GMP + H(+). It functions in the pathway cofactor biosynthesis; coenzyme F420 biosynthesis. Its function is as follows. Catalyzes the transfer of the 2-phospholactate moiety from (2S)-lactyl-2-diphospho-5'-guanosine to 7,8-didemethyl-8-hydroxy-5-deazariboflavin (FO) with the formation of oxidized coenzyme F420-0 and GMP. The protein is 2-phospho-L-lactate transferase of Methanosarcina barkeri (strain Fusaro / DSM 804).